We begin with the raw amino-acid sequence, 174 residues long: Co-chaperone protein HscB homolog (174 aa).

Residues 2–74 (NYFELFSFTP…ILRAEHMLSL (73 aa)) form the J domain.

It belongs to the HscB family. Interacts with HscA and stimulates its ATPase activity.

In terms of biological role, co-chaperone involved in the maturation of iron-sulfur cluster-containing proteins. Seems to help targeting proteins to be folded toward HscA. The chain is Co-chaperone protein HscB homolog from Shewanella woodyi (strain ATCC 51908 / MS32).